Here is a 532-residue protein sequence, read N- to C-terminus: Flavin-containing monooxygenase 3 (532 aa).

FAD-binding positions include 9-13 (GAGVS), glutamate 32, 40-41 (LW), and 61-62 (NS). NADP(+)-binding positions include 60 to 61 (SN) and 195 to 198 (SGCD). Serine 401 carries the phosphoserine modification. A helical membrane pass occupies residues 510-530 (FFFHWLKLFAIPILLIAVFLV).

The protein belongs to the FMO family. It depends on FAD as a cofactor.

It is found in the microsome membrane. It localises to the endoplasmic reticulum membrane. It catalyses the reaction trimethylamine + NADPH + O2 = trimethylamine N-oxide + NADP(+) + H2O. The enzyme catalyses N,N-dimethylaniline + NADPH + O2 + H(+) = N,N-dimethylaniline N-oxide + NADP(+) + H2O. It carries out the reaction hypotaurine + NADPH + O2 + H(+) = taurine + NADP(+) + H2O. The catalysed reaction is (S)-nicotine + NADPH + O2 = trans-(S)-nicotine N(1')-oxide + NADP(+) + H2O. It catalyses the reaction albendazole + NADPH + O2 + H(+) = albendazole S-oxide + NADP(+) + H2O. Essential hepatic enzyme that catalyzes the oxygenation of a wide variety of nitrogen- and sulfur-containing compounds including drugs as well as dietary compounds. Plays an important role in the metabolism of trimethylamine (TMA), via the production of trimethylamine N-oxide (TMAO) metabolite. TMA is generated by the action of gut microbiota using dietary precursors such as choline, choline containing compounds, betaine or L-carnitine. By regulating TMAO concentration, FMO3 directly impacts both platelet responsiveness and rate of thrombus formation. This chain is Flavin-containing monooxygenase 3 (FMO3), found in Pan troglodytes (Chimpanzee).